A 240-amino-acid chain; its full sequence is Phosphoribosylaminoimidazole-succinocarboxamide synthase (240 aa).

This sequence belongs to the SAICAR synthetase family.

It carries out the reaction 5-amino-1-(5-phospho-D-ribosyl)imidazole-4-carboxylate + L-aspartate + ATP = (2S)-2-[5-amino-1-(5-phospho-beta-D-ribosyl)imidazole-4-carboxamido]succinate + ADP + phosphate + 2 H(+). The protein operates within purine metabolism; IMP biosynthesis via de novo pathway; 5-amino-1-(5-phospho-D-ribosyl)imidazole-4-carboxamide from 5-amino-1-(5-phospho-D-ribosyl)imidazole-4-carboxylate: step 1/2. This is Phosphoribosylaminoimidazole-succinocarboxamide synthase from Pyrobaculum calidifontis (strain DSM 21063 / JCM 11548 / VA1).